The sequence spans 474 residues: 6-phospho-beta-galactosidase (474 aa).

Residues glutamine 19, histidine 116, asparagine 159, glutamate 160, and asparagine 297 each contribute to the D-galactose 6-phosphate site. Residue glutamate 160 is the Proton donor of the active site. Glutamate 375 functions as the Nucleophile in the catalytic mechanism. The D-galactose 6-phosphate site is built by serine 433, tryptophan 434, lysine 440, and tyrosine 442.

It belongs to the glycosyl hydrolase 1 family.

The catalysed reaction is a 6-phospho-beta-D-galactoside + H2O = D-galactose 6-phosphate + an alcohol. It participates in carbohydrate metabolism; lactose degradation; D-galactose 6-phosphate and beta-D-glucose from lactose 6-phosphate: step 1/1. In Lacticaseibacillus casei (strain BL23) (Lactobacillus casei), this protein is 6-phospho-beta-galactosidase.